The chain runs to 152 residues: Globin CTT-E/E' (152 aa).

Residues 1–15 (MKFIILALCVAAASA) form the signal peptide. The region spanning 16-152 (LSGDQIGLVQ…AFFGAVFAKM (137 aa)) is the Globin domain. Positions 73 and 102 each coordinate heme b.

Belongs to the globin family.

This Chironomus thummi thummi (Midge) protein is Globin CTT-E/E' (CTT-E).